Here is a 460-residue protein sequence, read N- to C-terminus: Argininosuccinate lyase (460 aa).

Belongs to the lyase 1 family. Argininosuccinate lyase subfamily.

The protein localises to the cytoplasm. The enzyme catalyses 2-(N(omega)-L-arginino)succinate = fumarate + L-arginine. It participates in amino-acid biosynthesis; L-arginine biosynthesis; L-arginine from L-ornithine and carbamoyl phosphate: step 3/3. The polypeptide is Argininosuccinate lyase (Maridesulfovibrio salexigens (strain ATCC 14822 / DSM 2638 / NCIMB 8403 / VKM B-1763) (Desulfovibrio salexigens)).